A 487-amino-acid polypeptide reads, in one-letter code: Anthocyanidin 3-O-glucosyltransferase 5 (487 aa).

The Proton acceptor role is filled by His-22. An anthocyanidin is bound at residue His-22. Asp-119 functions as the Charge relay in the catalytic mechanism. The UDP-alpha-D-glucose site is built by Gln-354, His-369, Trp-372, Asn-373, Ser-374, and Glu-377. Position 392 (Ala-392) interacts with an anthocyanidin. 2 residues coordinate UDP-alpha-D-glucose: Glu-393 and Gln-394.

It belongs to the UDP-glycosyltransferase family. In terms of tissue distribution, faintly expressed in cotyledons.

It catalyses the reaction an anthocyanidin + UDP-alpha-D-glucose + H(+) = an anthocyanidin 3-O-beta-D-glucoside + UDP. Its pathway is pigment biosynthesis; anthocyanin biosynthesis. In terms of biological role, in the presence of other necessary color factors, this glycosylation reaction allows the accumulation of anthocyanin pigments. The protein is Anthocyanidin 3-O-glucosyltransferase 5 (GT5) of Manihot esculenta (Cassava).